Consider the following 143-residue polypeptide: Interleukin-3 (143 aa).

Residues 1 to 23 (MSSFPILHLLLLLLGCQVPQAQG) form the signal peptide. Asn79 carries an N-linked (GlcNAc...) asparagine glycan.

This sequence belongs to the IL-3 family. Monomer.

The protein resides in the secreted. In terms of biological role, granulocyte/macrophage colony-stimulating factors are cytokines that act in hematopoiesis by controlling the production, differentiation, and function of 2 related white cell populations of the blood, the granulocytes and the monocytes-macrophages. This CSF induces granulocytes, macrophages, mast cells, stem cells, erythroid cells, eosinophils and megakaryocytes. This is Interleukin-3 (IL3) from Canis lupus familiaris (Dog).